Consider the following 448-residue polypeptide: MSQSTATYINVIGAGLAGSEAAYQIAKRGIPVKLYEMRGVKATPQHKTTNFAELVCSNSFRGDSLTNAVGLLKEEMRRLDSIIMRNGEANRVPAGGAMAVDREGYAESVTAELENHPLIEVIRGEITEIPDDAITVIATGPLTSDALAEKIHALNGGDGFYFYDAAAPIIDKSTIDMSKVYLKSRYDKGEAAYLNCPMTKEEFMAFHEALTTAEEAPLNAFEKEKYFEGCMPIEVMAKRGIKTMLYGPMKPVGLEYPDDYTGPRDGEFKTPYAVVQLRQDNAAGSLYNIVGFQTHLKWGEQKRVFQMIPGLENAEFVRYGVMHRNSYMDSPNLLTETFQSRSNPNLFFAGQMTGVEGYVESAASGLVAGINAARLFKREEALIFPQTTAIGSLPHYVTHADSKHFQPMNVNFGIIKELEGPRIRDKKERYEAIASRALADLDTCLASL.

13 to 18 is a binding site for FAD; it reads GAGLAG.

This sequence belongs to the MnmG family. TrmFO subfamily. FAD is required as a cofactor.

It is found in the cytoplasm. The enzyme catalyses uridine(54) in tRNA + (6R)-5,10-methylene-5,6,7,8-tetrahydrofolate + NADH + H(+) = 5-methyluridine(54) in tRNA + (6S)-5,6,7,8-tetrahydrofolate + NAD(+). It catalyses the reaction uridine(54) in tRNA + (6R)-5,10-methylene-5,6,7,8-tetrahydrofolate + NADPH + H(+) = 5-methyluridine(54) in tRNA + (6S)-5,6,7,8-tetrahydrofolate + NADP(+). Functionally, catalyzes the folate-dependent formation of 5-methyl-uridine at position 54 (M-5-U54) in all tRNAs. The protein is Methylenetetrahydrofolate--tRNA-(uracil-5-)-methyltransferase TrmFO of Streptococcus pyogenes serotype M1.